The sequence spans 445 residues: Lateral flagellar hook-associated protein 2 (445 aa).

Positions 388 to 423 (SGAFKSRKEALQANLDRLSDKQTTLERKYDMSYKRY) form a coiled coil.

Belongs to the FliD family. In terms of assembly, homopentamer.

The protein resides in the secreted. Its subcellular location is the bacterial flagellum. In terms of biological role, required for the morphogenesis and for the elongation of the flagellar filament by facilitating polymerization of the flagellin monomers at the tip of growing filament. Forms a capping structure, which prevents flagellin subunits (transported through the central channel of the flagellum) from leaking out without polymerization at the distal end. Essential for swarming motility. This is Lateral flagellar hook-associated protein 2 (fliDL) from Vibrio parahaemolyticus serotype O3:K6 (strain RIMD 2210633).